Reading from the N-terminus, the 127-residue chain is uncharacterized protein (127 aa).

The HTH asnC-type domain maps to 1 to 46 (MEVGLSPSACLRRIKLMEQAGVIRGYTALVDPTQSESTIAVIINIT).

In terms of biological role, not known, symbiotically active. This is an uncharacterized protein from Sinorhizobium fredii (strain NBRC 101917 / NGR234).